The chain runs to 177 residues: Anditomin synthesis protein L (177 aa).

2 helical membrane-spanning segments follow: residues valine 54–methionine 74 and isoleucine 117–phenylalanine 137. The N-linked (GlcNAc...) asparagine glycan is linked to asparagine 165.

Its subcellular location is the membrane. The protein operates within secondary metabolite biosynthesis; terpenoid biosynthesis. In terms of biological role, part of the gene cluster that mediates the biosynthesis of anditomin, a fungal meroterpenoid. The first step of the pathway is the synthesis of 3,5-dimethylorsellinic acid (DMOA) by the polyketide synthase andM. DMOA is then converted to the phthalide compound 5,7-dihydroxy-4,6-dimethylphthalide (DHDMP) by the cytochrome P450 monooxygenase andK, which is further prenylated by the prenyltransferase andD to yield farnesyl-DHDMP. Further epoxidation by the FAD-dependent monooxygenase andE leads to epoxyfarnesyl-DHDMP. The next step involves the terpene cyclase andB that converts epoxyfarnesyl-DHDMP into preandiloid A through opening of the epoxide ring followed by the cyclization of the farnesyl moiety. Preandiloid A is in turn oxidized at the C-3 hydroxyl group to yield preandiloid B by the dehydrogenase andC. The dioxygenase andA is solely responsible for the dehydrogenation of preandiloid B leading to the enone preandiloid C, as well as for the intriguing structural rearrangement to generate the bicyclo[2.2.2]octane core, transforming preandiloid C into andiconin. FAD-binding monooxygenase andJ then produces andilesin D which is reduced by dehydrogenase andI to yield andilesin A. Action of acetyltransferase andG followed by a spontaneous acetate elimination leads then to andilesin B, which is in turn substrate of the short chain dehydrogenase andH to yield andilesin C. Finally, the dioxygenase andF catalyzes the transformation of andilesin C to anditomin. The exact role of andL within the anditomin biosynthetic pathway has not been identified yet. This Emericella variicolor (Aspergillus stellatus) protein is Anditomin synthesis protein L.